We begin with the raw amino-acid sequence, 289 residues long: MWRIYPRLRDRWRGLLDRRLSDPTVSVWPGPAPQPPARAYVPPTERKRFYQNVSISQGEGGFEINLDHRKLKTPQAKLFTVPSEALAIAVATEWDSQQDTIKFYTMHLTTLCNTSLDNPTQRSKDQLIRAAVKFLDTDTICYRVEEPETLVELQKNEWDPVIEWAEKRYGMEIGSSTSIMGPSIPTQTREVLTSHLSSYNMWALQGIEFVVAQLKSMLLTLGLIDLRLTVEQAVLLSRLEEEYQIQKWGNIEWAHDYELQELRARTAAGTLFVHLCSESSTVKHKLLQE.

Residues 1 to 40 (MWRIYPRLRDRWRGLLDRRLSDPTVSVWPGPAPQPPARAY) constitute a mitochondrion transit peptide. At lysine 133 the chain carries N6-succinyllysine.

Belongs to the ATP12 family. In terms of assembly, interacts with ATP5F1B; involved in the assembly of the F1 component of the mitochondrial ATP synthase (ATPase). Interacts with FMC1.

It localises to the mitochondrion inner membrane. Plays a role in the assembly of the F1 component of the mitochondrial ATP synthase (ATPase). The protein is ATP synthase mitochondrial F1 complex assembly factor 2 of Mus musculus (Mouse).